The chain runs to 219 residues: MSQSQRNSDGWTPRTRLGRMVQDGDVTSMEQALNSGLPLKEPELVDQLLPGLDDEVLDINMVQRMTDSGRRVKFRCVVAIGNRNGFLGYAEGRDDQVGSAIQKAIDVAKLNLISVDRGSGSWEDSAGGVNSLTRNAEGKAGSVTVEVMPAPQGLGLAAAETVSNILELAGVEDAWTRSNGNTRTTVNLAKATYNALRNASQSRTPRRAAAKQREQEVSE.

Residues 52-115 (LDDEVLDINM…DVAKLNLISV (64 aa)) form the S5 DRBM domain. The interval 196–219 (LRNASQSRTPRRAAAKQREQEVSE) is disordered.

It belongs to the universal ribosomal protein uS5 family. In terms of assembly, part of the 30S ribosomal subunit. Contacts protein S4.

Functionally, with S4 and S12 plays an important role in translational accuracy. This chain is Small ribosomal subunit protein uS5, found in Haloquadratum walsbyi (strain DSM 16790 / HBSQ001).